The sequence spans 88 residues: Small ribosomal subunit protein bS20 (88 aa).

It belongs to the bacterial ribosomal protein bS20 family.

In terms of biological role, binds directly to 16S ribosomal RNA. This Syntrophomonas wolfei subsp. wolfei (strain DSM 2245B / Goettingen) protein is Small ribosomal subunit protein bS20.